Consider the following 152-residue polypeptide: Lipoprotein signal peptidase (152 aa).

Transmembrane regions (helical) follow at residues 55-75 (NKMW…VFYM) and 85-105 (LGIS…DRVF). Residues aspartate 111 and aspartate 129 contribute to the active site. Residues 124 to 144 (VFNIADSALCIGVVLIIIQTL) traverse the membrane as a helical segment.

The protein belongs to the peptidase A8 family.

The protein localises to the cell membrane. The catalysed reaction is Release of signal peptides from bacterial membrane prolipoproteins. Hydrolyzes -Xaa-Yaa-Zaa-|-(S,diacylglyceryl)Cys-, in which Xaa is hydrophobic (preferably Leu), and Yaa (Ala or Ser) and Zaa (Gly or Ala) have small, neutral side chains.. It participates in protein modification; lipoprotein biosynthesis (signal peptide cleavage). Its function is as follows. This protein specifically catalyzes the removal of signal peptides from prolipoproteins. The polypeptide is Lipoprotein signal peptidase (Bacillus cytotoxicus (strain DSM 22905 / CIP 110041 / 391-98 / NVH 391-98)).